The sequence spans 654 residues: Tetratricopeptide repeat protein 30 homolog (654 aa).

TPR repeat units follow at residues 10 to 43 (EGHVTRTIYNLIKDKRYEDVIECITNIGEAANTR), 44 to 76 (AGLSTLGHCYYHAQKYEEAATCYEQLCQLAPKE), 143 to 176 (ADTLNDEGCLLYQADQHESAVQRFQAALQVGGFN), 178 to 210 (LVAYNVALAHFQRKQRAQALDYTSEIVERGVRN), 384 to 417 (LAAKVQEVRATNEQHALRDALKDYEQALELYLPV), 449 to 483 (AVWRLNAGHVLFMQGDKYNEAAAFYEPIVRQHSDD), and 533 to 566 (CIVNLVVGTLYCAKSNYEFGLTRIAHALEGGAGG).

Belongs to the TTC30/dfy-1/fleer family.

Its subcellular location is the cell projection. The protein localises to the cilium. In terms of biological role, required for polyglutamylation of axonemal tubulin in sensory cilia. Plays a role in anterograde intraflagellar transport (IFT), the process by which cilia precursors are transported from the base of the cilium to the site of their incorporation at the tip. This chain is Tetratricopeptide repeat protein 30 homolog, found in Drosophila pseudoobscura pseudoobscura (Fruit fly).